Here is a 235-residue protein sequence, read N- to C-terminus: Probable pyridoxal 5'-phosphate synthase subunit PDX1 (235 aa).

K16 (schiff-base intermediate with D-ribose 5-phosphate) is an active-site residue. R104 provides a ligand contact to D-glyceraldehyde 3-phosphate. D-ribose 5-phosphate contacts are provided by residues G153 and 174-175 (GS).

Belongs to the PdxS/SNZ family.

The enzyme catalyses aldehydo-D-ribose 5-phosphate + D-glyceraldehyde 3-phosphate + L-glutamine = pyridoxal 5'-phosphate + L-glutamate + phosphate + 3 H2O + H(+). It participates in cofactor biosynthesis; pyridoxal 5'-phosphate biosynthesis. Catalyzes the formation of pyridoxal 5'-phosphate from ribose 5-phosphate (RBP), glyceraldehyde 3-phosphate (G3P) and ammonia. The ammonia is provided by PDX2. Can also use ribulose 5-phosphate and dihydroxyacetone phosphate as substrates, resulting from enzyme-catalyzed isomerization of RBP and G3P, respectively. Also plays an indirect role in resistance to singlet oxygen-generating photosensitizers. The chain is Probable pyridoxal 5'-phosphate synthase subunit PDX1 from Stellaria longipes (Longstalk starwort).